A 358-amino-acid polypeptide reads, in one-letter code: Phenylalanine--tRNA ligase alpha subunit (358 aa).

E258 is a binding site for Mg(2+).

It belongs to the class-II aminoacyl-tRNA synthetase family. Phe-tRNA synthetase alpha subunit type 1 subfamily. Tetramer of two alpha and two beta subunits. Mg(2+) is required as a cofactor.

Its subcellular location is the cytoplasm. It catalyses the reaction tRNA(Phe) + L-phenylalanine + ATP = L-phenylalanyl-tRNA(Phe) + AMP + diphosphate + H(+). The protein is Phenylalanine--tRNA ligase alpha subunit of Rhodospirillum rubrum (strain ATCC 11170 / ATH 1.1.1 / DSM 467 / LMG 4362 / NCIMB 8255 / S1).